The sequence spans 348 residues: Ion-translocating oxidoreductase complex subunit D (348 aa).

The next 5 helical transmembrane spans lie at 15-35 (LTAKFMLWVMVAMLPALGMQA), 36-56 (YFFGYGVFIQVFIALLLAVAI), 67-87 (LTAFYVADLSGVLTALILAMS), 88-108 (IPPYAPYWIIVIGIIVALLLA), and 125-145 (VAYALLLVSFPVQMTGWLVPI). FMN phosphoryl threonine is present on threonine 186. Transmembrane regions (helical) follow at residues 212–232 (LFANGWWQINLAFLAGGLLLI), 241–261 (IPAAMLGMFALLSGLTDLLLP), 265–285 (LNVVSQLFSGAMMFGAFFIAT), 298–318 (LIFGGLIGLFVYLIRYYGNYP), and 320–340 (AVAFSVLLANICVPLIDHYTQ).

It belongs to the NqrB/RnfD family. In terms of assembly, the complex is composed of six subunits: RnfA, RnfB, RnfC, RnfD, RnfE and RnfG. FMN serves as cofactor.

It localises to the cell inner membrane. Functionally, part of a membrane-bound complex that couples electron transfer with translocation of ions across the membrane. This Actinobacillus pleuropneumoniae serotype 7 (strain AP76) protein is Ion-translocating oxidoreductase complex subunit D.